Here is a 485-residue protein sequence, read N- to C-terminus: Carbohydrate sulfotransferase 7 (485 aa).

Over 1–12 the chain is Cytoplasmic; sequence MKGRRRRRREYC. Residues 13–33 traverse the membrane as a helical; Signal-anchor for type II membrane protein segment; the sequence is KFTLLLALYTLLLLLVPSVLD. At 34 to 485 the chain is on the lumenal side; sequence SGSEQDKGGR…PLETNANWAT (452 aa). The tract at residues 66-88 is disordered; the sequence is EQGAEVRFQAEGNPDRSPRPQGN. A glycan (N-linked (GlcNAc...) asparagine) is linked at asparagine 88. 109–115 serves as a coordination point for 3'-phosphoadenylyl sulfate; the sequence is WRTGSSF. Residue asparagine 185 is glycosylated (N-linked (GlcNAc...) asparagine). 277 to 285 lines the 3'-phosphoadenylyl sulfate pocket; the sequence is RDPRAVHNS. An N-linked (GlcNAc...) asparagine glycan is attached at asparagine 406. Serine 461 is subject to Phosphoserine. The span at 465–475 shows a compositional bias: basic and acidic residues; it reads RDVKTVRKGET. Residues 465-485 are disordered; the sequence is RDVKTVRKGETPLETNANWAT.

The protein belongs to the sulfotransferase 1 family. Gal/GlcNAc/GalNAc subfamily.

It is found in the golgi apparatus membrane. It carries out the reaction chondroitin beta-D-glucuronate + n 3'-phosphoadenylyl sulfate = chondroitin 6'-sulfate + n adenosine 3',5'-bisphosphate + n H(+). In terms of biological role, sulfotransferase that utilizes 3'-phospho-5'-adenylyl sulfate (PAPS) as sulfonate donor to catalyze the transfer of sulfate to position 6 of non-reducing N-acetylglucosamine (GlcNAc) residues. Preferentially acts on mannose-linked GlcNAc. Also able to catalyze the transfer of sulfate to position 6 of the N-acetylgalactosamine (GalNAc) residue of chondroitin. Also acts on core 2 mucin-type oligosaccharide and N-acetyllactosamine oligomer with a lower efficiency. Has weak or no activity toward keratan sulfate and oligosaccharides containing the Galbeta1-4GlcNAc. Catalyzes 6-O-sulfation of beta-benzyl GlcNAc but not alpha- or beta-benzyl GalNAc. The polypeptide is Carbohydrate sulfotransferase 7 (Chst7) (Rattus norvegicus (Rat)).